The primary structure comprises 898 residues: Dipeptidyl peptidase 8 (898 aa).

Residues serine 755, aspartate 833, and histidine 865 each act as charge relay system in the active site.

Belongs to the peptidase S9B family. DPPIV subfamily. As to quaternary structure, homodimer. Forms a ternary complex with NLRP1, composed of a DPP8 homodimer, one full-length NLRP1 protein, and one cleaved C-terminus of NLRP1 (NACHT, LRR and PYD domains-containing protein 1, C-terminus). Forms a ternary complex with CARD8, composed of a DPP8 homodimer, one full-length NLRP1 protein, and one cleaved C-terminus of CARD8 (Caspase recruitment domain-containing protein 8, C-terminus). In the ternary complex, only one subunit of the DPP8 homodimer is bound to NLRP1 or CARD8. In terms of tissue distribution, ubiquitously expressed, with highest levels in testis, placenta, prostate, muscle and brain.

Its subcellular location is the cytoplasm. The enzyme catalyses Release of an N-terminal dipeptide, Xaa-Yaa-|-Zaa-, from a polypeptide, preferentially when Yaa is Pro, provided Zaa is neither Pro nor hydroxyproline.. Inhibited by zinc. Inhibited by the serine proteinase inhibitor 4-(2-aminoethyl)benzenesulphonyl fluoride (AEBSF), and by di-isopropylfluorophosphate. Specifically inhibited by isoindoline derivatives. Inhibited by Val-boroPro (Talabostat, PT-100), a non-selective inhibitor, which triggers pyroptosis in monocytes and macrophages. Dipeptidyl peptidase that cleaves off N-terminal dipeptides from proteins having a Pro or Ala residue at position 2. Acts as a key inhibitor of caspase-1-dependent monocyte and macrophage pyroptosis in resting cells by preventing activation of NLRP1 and CARD8. Sequesters the cleaved C-terminal part of NLRP1 and CARD8, which respectively constitute the active part of the NLRP1 and CARD8 inflammasomes, in a ternary complex, thereby preventing their oligomerization and activation. The dipeptidyl peptidase activity is required to suppress NLRP1 and CARD8; however, neither NLRP1 nor CARD8 are bona fide substrates of DPP8, suggesting the existence of substrate(s) required for NLRP1 and CARD8 inhibition. In Homo sapiens (Human), this protein is Dipeptidyl peptidase 8.